Reading from the N-terminus, the 292-residue chain is Proteasome subunit beta (292 aa).

The propeptide at 1–62 is removed in mature form; by autocatalysis; the sequence is MSESLGSVPG…HRAADDIPHG (62 aa). Thr-63 acts as the Nucleophile in catalysis.

The protein belongs to the peptidase T1B family. As to quaternary structure, the 20S proteasome core is composed of 14 alpha and 14 beta subunits that assemble into four stacked heptameric rings, resulting in a barrel-shaped structure. The two inner rings, each composed of seven catalytic beta subunits, are sandwiched by two outer rings, each composed of seven alpha subunits. The catalytic chamber with the active sites is on the inside of the barrel. Has a gated structure, the ends of the cylinder being occluded by the N-termini of the alpha-subunits. Is capped by the proteasome-associated ATPase, ARC.

Its subcellular location is the cytoplasm. It catalyses the reaction Cleavage of peptide bonds with very broad specificity.. It participates in protein degradation; proteasomal Pup-dependent pathway. The formation of the proteasomal ATPase ARC-20S proteasome complex, likely via the docking of the C-termini of ARC into the intersubunit pockets in the alpha-rings, may trigger opening of the gate for substrate entry. Interconversion between the open-gate and close-gate conformations leads to a dynamic regulation of the 20S proteasome proteolysis activity. Its function is as follows. Component of the proteasome core, a large protease complex with broad specificity involved in protein degradation. The polypeptide is Proteasome subunit beta (Gordonia bronchialis (strain ATCC 25592 / DSM 43247 / BCRC 13721 / JCM 3198 / KCTC 3076 / NBRC 16047 / NCTC 10667) (Rhodococcus bronchialis)).